The sequence spans 359 residues: Phospho-N-acetylmuramoyl-pentapeptide-transferase (359 aa).

10 helical membrane-spanning segments follow: residues 27–47 (IGAAVCAFLLVLFLGPLFIRT), 71–91 (VPTMGGLLILLSVTVSTLLWA), 93–113 (LDNPLIWLVLLVTLFFGMIGA), 134–154 (LLLQIAGALIVGFFVYLHPGY), 170–190 (LGWFYIVFAVIVIVGASNAVN), 203–223 (MVVSSAVYLLFAYLAGNVVLA), 234–254 (SGELAIFCGTLFGACLGFLWF), 262–282 (FMGDVGSLALGGALGSIAIII), 286–306 (FLLAIVGGVFVMEALSVMLQV), and 336–356 (KVVVRFWIVSIILGLFAIATL).

The protein belongs to the glycosyltransferase 4 family. MraY subfamily. Mg(2+) is required as a cofactor.

It localises to the cell inner membrane. It catalyses the reaction UDP-N-acetyl-alpha-D-muramoyl-L-alanyl-gamma-D-glutamyl-meso-2,6-diaminopimeloyl-D-alanyl-D-alanine + di-trans,octa-cis-undecaprenyl phosphate = di-trans,octa-cis-undecaprenyl diphospho-N-acetyl-alpha-D-muramoyl-L-alanyl-D-glutamyl-meso-2,6-diaminopimeloyl-D-alanyl-D-alanine + UMP. It participates in cell wall biogenesis; peptidoglycan biosynthesis. Catalyzes the initial step of the lipid cycle reactions in the biosynthesis of the cell wall peptidoglycan: transfers peptidoglycan precursor phospho-MurNAc-pentapeptide from UDP-MurNAc-pentapeptide onto the lipid carrier undecaprenyl phosphate, yielding undecaprenyl-pyrophosphoryl-MurNAc-pentapeptide, known as lipid I. The sequence is that of Phospho-N-acetylmuramoyl-pentapeptide-transferase from Desulfotalea psychrophila (strain LSv54 / DSM 12343).